The primary structure comprises 1241 residues: RNA polymerase II C-terminal domain phosphatase-like 3 (1241 aa).

Disordered regions lie at residues 361–402, 428–470, 505–525, 578–598, 677–702, 720–800, and 852–885; these read DHDA…TTEG, VFKT…HLIY, ISAPTASDQTVKPSAKSRDPR, KRQKSDTDAPKAAGTGGWLED, AIQKPMDPRRAAQLPGSSVQPGVSTP, VLQD…QNGT, and TERDVKHNPSNPNAQDEDVSVSAASVTAAAGPTR. Residues 368 to 378 are compositionally biased toward polar residues; that stretch reads PSPTRETTPSL. The span at 441-466 shows a compositional bias: low complexity; it reads GEPNDGNGDVGGEVSSSVVKSSNPGS. Residues 677 to 686 are compositionally biased toward basic and acidic residues; it reads AIQKPMDPRR. Composition is skewed to polar residues over residues 691–702 and 791–800; these read PGSSVQPGVSTP and PRQNISQNGT. Residues 871 to 881 are compositionally biased toward low complexity; that stretch reads SVSAASVTAAA. Positions 923-1103 constitute an FCP1 homology domain; the sequence is FASQKLSLVL…GLLGPSLLEL (181 aa). Positions 1146 to 1239 constitute a BRCT domain; sequence EQRKILAGCR…QRANENLYAI (94 aa).

As to quaternary structure, interacts with RAP74. The cofactor is Mg(2+). Co(2+) is required as a cofactor. Requires Mn(2+) as cofactor.

It is found in the nucleus. It catalyses the reaction O-phospho-L-seryl-[protein] + H2O = L-seryl-[protein] + phosphate. The catalysed reaction is O-phospho-L-threonyl-[protein] + H2O = L-threonyl-[protein] + phosphate. Completely dephosphorylates 'Ser-2', and partially 'Ser-5' and 'Ser-7' of the heptad repeats YSPTSPS in the C-terminal domain (CTD) of the largest RNA polymerase II subunit (RPB1). Involved in defense response. Acts as a negative regulator of immune gene expression and immunity to pathogen infections. Preferentially dephosphorylates 'Ser-2' of RNA polymerase II CTD. This counterregulates the MAP kinase (MAPK) or cyclin-dependent kinase C (CDKC)-mediated phosphorylation of CTD in response to pathogens and upon perception of microbe-associated molecular patterns (MAMPs). MAPKs phosphorylate and activate CDKCs, which are CTD kinases that positively regulate plant innate immunity. Acts as a negative regulator of stress gene transcription involved in abscisic acid (ABA) mediated signaling pathway and cold resistance. Acts as a post-transcriptional gene silencing (PTGS) suppressor. The chain is RNA polymerase II C-terminal domain phosphatase-like 3 from Arabidopsis thaliana (Mouse-ear cress).